Here is a 182-residue protein sequence, read N- to C-terminus: MGLLSILRKLKSAPDQEVRILLLGLDNAGKTTLLKQLASEDISHITPTQGFNIKSVQSQGFKLNVWDIGGQRKIRPYWKNYFENTDILIYVIDSADRKRFEETGQELAELLEEEKLSCVPVLIFANKQDLLTAAPASEIAEGLNLHTIRDRVWQIQSCSALTGEGVQDGMNWVCKNVNAKKK.

Glycine 2 carries the N-myristoyl glycine lipid modification. Phosphoserine is present on serine 5. GTP is bound by residues 24 to 31 (GLDNAGKT), threonine 48, 67 to 71 (DIGGQ), glycine 70, 126 to 129 (NKQD), and 159 to 161 (SAL). Residues threonine 31 and threonine 48 each coordinate Mg(2+).

Belongs to the small GTPase superfamily. Arf family. As to quaternary structure, found in a complex with ARL3, RP2 and UNC119 (or UNC119B); RP2 induces hydrolysis of GTP ARL3 in the complex, leading to the release of UNC119 (or UNC119B). Interacts with RP2; interaction is direct and stimulated with the activated GTP-bound form of ARL3. Interacts with SYS1. The GTP-bound form interacts with ARL2BP and PDE6D. Microtubule-associated protein. May interact with GOLGA4. Interacts with GGA1; the interaction recruits PKD1:PKD2 complex to trans-Golgi network and is required for ciliary targeting of PKD1:PKD2 complex. Interacts with DNAAF9. In terms of tissue distribution, expressed in the retina. Strongly expressed in connecting cilium, the myoid region of the inner segments (IS) and in cone photoreceptors (at protein level).

It is found in the golgi apparatus membrane. The protein resides in the cytoplasm. The protein localises to the cytoskeleton. Its subcellular location is the spindle. It localises to the nucleus. It is found in the microtubule organizing center. The protein resides in the centrosome. The protein localises to the cell projection. Its subcellular location is the cilium. Its function is as follows. Small GTP-binding protein which cycles between an inactive GDP-bound and an active GTP-bound form, and the rate of cycling is regulated by guanine nucleotide exchange factors (GEF) and GTPase-activating proteins (GAP). Required for normal cytokinesis and cilia signaling. Requires assistance from GTPase-activating proteins (GAPs) like RP2 and PDE6D, in order to cycle between inactive GDP-bound and active GTP-bound forms. Required for targeting proteins to the cilium, including myristoylated NPHP3 and prenylated INPP5E. Targets NPHP3 to the ciliary membrane by releasing myristoylated NPHP3 from UNC119B cargo adapter into the cilium. Required for PKD1:PKD2 complex targeting from the trans-Golgi network to the cilium. The sequence is that of ADP-ribosylation factor-like protein 3 (ARL3) from Homo sapiens (Human).